The following is a 361-amino-acid chain: Ribosomal RNA large subunit methyltransferase M (361 aa).

S-adenosyl-L-methionine is bound by residues S190, 223–226, D242, D262, and D280; that span reads CPGG. The active-site Proton acceptor is the K309.

Belongs to the class I-like SAM-binding methyltransferase superfamily. RNA methyltransferase RlmE family. RlmM subfamily. As to quaternary structure, monomer.

The protein localises to the cytoplasm. The catalysed reaction is cytidine(2498) in 23S rRNA + S-adenosyl-L-methionine = 2'-O-methylcytidine(2498) in 23S rRNA + S-adenosyl-L-homocysteine + H(+). In terms of biological role, catalyzes the 2'-O-methylation at nucleotide C2498 in 23S rRNA. The polypeptide is Ribosomal RNA large subunit methyltransferase M (Actinobacillus pleuropneumoniae serotype 7 (strain AP76)).